We begin with the raw amino-acid sequence, 72 residues long: uncharacterized protein (72 aa).

This is an uncharacterized protein from Escherichia coli (Bacteriophage T4).